The following is a 313-amino-acid chain: Ribosomal RNA small subunit methyltransferase H (313 aa).

S-adenosyl-L-methionine contacts are provided by residues 35–37 (GGH), aspartate 55, phenylalanine 80, aspartate 102, and glutamine 109.

The protein belongs to the methyltransferase superfamily. RsmH family.

The protein localises to the cytoplasm. The enzyme catalyses cytidine(1402) in 16S rRNA + S-adenosyl-L-methionine = N(4)-methylcytidine(1402) in 16S rRNA + S-adenosyl-L-homocysteine + H(+). In terms of biological role, specifically methylates the N4 position of cytidine in position 1402 (C1402) of 16S rRNA. In Shewanella loihica (strain ATCC BAA-1088 / PV-4), this protein is Ribosomal RNA small subunit methyltransferase H.